Reading from the N-terminus, the 99-residue chain is 10 kDa heat shock protein, mitochondrial (99 aa).

It belongs to the GroES chaperonin family. In terms of assembly, homoheptamer arranged in a ring structure. 2 heptameric Hsp10 rings interact with a Hsp60 tetradecamer in the structure of a back-to-back double heptameric ring to form the symmetrical football complex.

The protein localises to the mitochondrion matrix. Its function is as follows. Co-chaperonin implicated in mitochondrial protein import and macromolecular assembly. Together with Hsp60, facilitates the correct folding of imported proteins. May also prevent misfolding and promote the refolding and proper assembly of unfolded polypeptides generated under stress conditions in the mitochondrial matrix. The functional units of these chaperonins consist of heptameric rings of the large subunit Hsp60, which function as a back-to-back double ring. In a cyclic reaction, Hsp60 ring complexes bind one unfolded substrate protein per ring, followed by the binding of ATP and association with 2 heptameric rings of the co-chaperonin Hsp10. This leads to sequestration of the substrate protein in the inner cavity of Hsp60 where, for a certain period of time, it can fold undisturbed by other cell components. Synchronous hydrolysis of ATP in all Hsp60 subunits results in the dissociation of the chaperonin rings and the release of ADP and the folded substrate protein. In Oryzias latipes (Japanese rice fish), this protein is 10 kDa heat shock protein, mitochondrial (hspe1).